A 152-amino-acid polypeptide reads, in one-letter code: Aspartate carbamoyltransferase regulatory chain (152 aa).

Zn(2+) contacts are provided by cysteine 108, cysteine 113, cysteine 137, and cysteine 140.

This sequence belongs to the PyrI family. Contains catalytic and regulatory chains. Zn(2+) is required as a cofactor.

In terms of biological role, involved in allosteric regulation of aspartate carbamoyltransferase. This Neisseria meningitidis serogroup A / serotype 4A (strain DSM 15465 / Z2491) protein is Aspartate carbamoyltransferase regulatory chain.